We begin with the raw amino-acid sequence, 510 residues long: Probable inositol 3-phosphate synthase isozyme 3 (510 aa).

Belongs to the myo-inositol 1-phosphate synthase family. NAD(+) is required as a cofactor. In terms of tissue distribution, expressed in siliques, leaves, roots, seed endosperm, but not in embryos. Highest expression in roots. Confined to vascular tissue and hydathodes of leaves.

The protein resides in the cytoplasm. It carries out the reaction D-glucose 6-phosphate = 1D-myo-inositol 3-phosphate. The protein operates within polyol metabolism; myo-inositol biosynthesis; myo-inositol from D-glucose 6-phosphate: step 1/2. Key enzyme in myo-inositol biosynthesis pathway that catalyzes the conversion of glucose 6-phosphate to 1-myo-inositol 1-phosphate in a NAD-dependent manner. This is Probable inositol 3-phosphate synthase isozyme 3 (IPS3) from Arabidopsis thaliana (Mouse-ear cress).